We begin with the raw amino-acid sequence, 218 residues long: Large ribosomal subunit protein uL3 (218 aa).

The disordered stretch occupies residues 134–154; the sequence is GRASHGNSRSHNVPGSIGMAQ. Residue glutamine 154 is modified to N5-methylglutamine.

The protein belongs to the universal ribosomal protein uL3 family. Part of the 50S ribosomal subunit. Forms a cluster with proteins L14 and L19. In terms of processing, methylated by PrmB.

Its function is as follows. One of the primary rRNA binding proteins, it binds directly near the 3'-end of the 23S rRNA, where it nucleates assembly of the 50S subunit. This is Large ribosomal subunit protein uL3 from Polynucleobacter necessarius subsp. necessarius (strain STIR1).